Reading from the N-terminus, the 113-residue chain is Propane 2-monooxygenase, effector component (113 aa).

The protein belongs to the TmoD/XamoD family. The propane 2-monooxygenase multicomponent enzyme system is composed of an electron transfer component and a monooxygenase component interacting with the effector protein PrmD. The electron transfer component is composed of a reductase (PrmB), and the monooxygenase component is formed by a large subunit (PrmA) and a small subunit (PrmC).

Effector component of the propane 2-monooxygenase multicomponent enzyme system which is involved in the degradation of propane via the O2-dependent hydroxylation of propane. This Rhodococcus jostii (strain RHA1) protein is Propane 2-monooxygenase, effector component.